The primary structure comprises 682 residues: TPR repeat-containing thioredoxin TTL4 (682 aa).

Disordered regions lie at residues 1–120 (MSHY…GTPL) and 132–157 (NNNN…TGNI). Ser-8 bears the Phosphoserine mark. Positions 16-39 (KFRDSLSFQRDDDVINKPDFRELD) are enriched in basic and acidic residues. Ser-42 carries the post-translational modification Phosphoserine. Residues 48–71 (GSSSAAATPAASGSSSSSSGSASG) are compositionally biased toward low complexity. 7 TPR repeats span residues 211-244 (SEEV…SPEN), 246-278 (AYRS…DPSY), 280-312 (RAHQ…PDQA), 402-435 (AYVL…DHSN), 449-482 (VAKA…DAFN), 483-516 (SVLY…QPSY), and 518-550 (KALL…LPGD). One can recognise a Thioredoxin domain in the interval 587–674 (DKFKTATSLP…MVCPSHQLLE (88 aa)).

Widely expressed.

Its function is as follows. Involved in osmotic and salt stress tolerance. May play a role in the control of meristematic cell size during osmotic stress. This Arabidopsis thaliana (Mouse-ear cress) protein is TPR repeat-containing thioredoxin TTL4 (TTL4).